The sequence spans 138 residues: MLQPKRTKYRKPHNVSYEGHTKGNGYVAFGEYGIVATKGNWIDARAIESARVAISKCLGKTGKMWIRIFPHMSKTKKPLEVRMGSGKGNPEFWVAVVKKGTVMFEVANIPEQQMIKALTRAGHKLPVTWKLMKREENS.

The protein belongs to the universal ribosomal protein uL16 family. Part of the 50S ribosomal subunit.

Functionally, binds 23S rRNA and is also seen to make contacts with the A and possibly P site tRNAs. In Mycoplasma genitalium (strain ATCC 33530 / DSM 19775 / NCTC 10195 / G37) (Mycoplasmoides genitalium), this protein is Large ribosomal subunit protein uL16.